We begin with the raw amino-acid sequence, 530 residues long: Transcription factor SPT20 homolog (530 aa).

A Phosphoserine modification is found at S296. The interval 419–530 (CPVKMSHSSS…PASSSQRHES (112 aa)) is disordered. 2 stretches are compositionally biased toward low complexity: residues 424–436 (SHSSSGSASLNSG) and 466–475 (SSSGNSSSGN). Residue T490 is modified to Phosphothreonine. The span at 514–530 (LSPAALSPASSSQRHES) shows a compositional bias: low complexity. Phosphoserine occurs at positions 515 and 520.

It belongs to the SPT20 family. As to quaternary structure, interacts with ATG9A. Interacts with MAPK14.

Functionally, required for MAP kinase p38 (MAPK11, MAPK12, MAPK13 and/or MAPK14) activation during gastrulation. Required for down-regulation of E-cadherin during gastrulation by regulating E-cadherin protein level downstream from NCK-interacting kinase (NIK) and independently of the regulation of transcription by FGF signaling and Snail. Required for starvation-induced ATG9A trafficking during autophagy. The polypeptide is Transcription factor SPT20 homolog (Supt20h) (Rattus norvegicus (Rat)).